A 134-amino-acid chain; its full sequence is Small ribosomal subunit protein uS11 (134 aa).

Belongs to the universal ribosomal protein uS11 family. In terms of assembly, part of the 30S ribosomal subunit. Interacts with proteins S7 and S18. Binds to IF-3.

In terms of biological role, located on the platform of the 30S subunit, it bridges several disparate RNA helices of the 16S rRNA. Forms part of the Shine-Dalgarno cleft in the 70S ribosome. The chain is Small ribosomal subunit protein uS11 from Salinibacter ruber (strain DSM 13855 / M31).